Here is a 335-residue protein sequence, read N- to C-terminus: Glutamyl-tRNA reductase (335 aa).

Substrate-binding positions include 60–63 (TCHR), Ser-110, 115–117 (ETE), and Gln-121. The Nucleophile role is filled by Cys-61. An NADP(+)-binding site is contributed by 189–194 (GYSEIN).

Belongs to the glutamyl-tRNA reductase family. Homodimer.

It carries out the reaction (S)-4-amino-5-oxopentanoate + tRNA(Glu) + NADP(+) = L-glutamyl-tRNA(Glu) + NADPH + H(+). It functions in the pathway porphyrin-containing compound metabolism; protoporphyrin-IX biosynthesis; 5-aminolevulinate from L-glutamyl-tRNA(Glu): step 1/2. Functionally, catalyzes the NADPH-dependent reduction of glutamyl-tRNA(Glu) to glutamate 1-semialdehyde (GSA). This is Glutamyl-tRNA reductase from Chlamydia trachomatis serovar L2 (strain ATCC VR-902B / DSM 19102 / 434/Bu).